Consider the following 550-residue polypeptide: Hydroxylamine reductase (550 aa).

Residues C3, C6, C18, and C25 each contribute to the [2Fe-2S] cluster site. H249, E273, C317, C405, C433, C458, E492, and K494 together coordinate hybrid [4Fe-2O-2S] cluster. At C405 the chain carries Cysteine persulfide.

This sequence belongs to the HCP family. Requires [2Fe-2S] cluster as cofactor. Hybrid [4Fe-2O-2S] cluster serves as cofactor.

The protein localises to the cytoplasm. The enzyme catalyses A + NH4(+) + H2O = hydroxylamine + AH2 + H(+). Its function is as follows. Catalyzes the reduction of hydroxylamine to form NH(3) and H(2)O. The protein is Hydroxylamine reductase of Escherichia coli O6:H1 (strain CFT073 / ATCC 700928 / UPEC).